The chain runs to 308 residues: UDP-N-acetylenolpyruvoylglucosamine reductase (308 aa).

The region spanning 33-197 (TGGNADFYLS…LEASFNLAPG (165 aa)) is the FAD-binding PCMH-type domain. The active site involves Arg-176. The active-site Proton donor is the Ser-226. The active site involves Glu-296.

The protein belongs to the MurB family. Requires FAD as cofactor.

It is found in the cytoplasm. It catalyses the reaction UDP-N-acetyl-alpha-D-muramate + NADP(+) = UDP-N-acetyl-3-O-(1-carboxyvinyl)-alpha-D-glucosamine + NADPH + H(+). The protein operates within cell wall biogenesis; peptidoglycan biosynthesis. Cell wall formation. In Staphylococcus carnosus (strain TM300), this protein is UDP-N-acetylenolpyruvoylglucosamine reductase.